The chain runs to 143 residues: Ribosome-binding factor A (143 aa).

The disordered stretch occupies residues 123–143; the sequence is DKSLQENYKQNDKETKAEKLR.

Belongs to the RbfA family. Monomer. Binds 30S ribosomal subunits, but not 50S ribosomal subunits or 70S ribosomes.

The protein resides in the cytoplasm. Its function is as follows. One of several proteins that assist in the late maturation steps of the functional core of the 30S ribosomal subunit. Associates with free 30S ribosomal subunits (but not with 30S subunits that are part of 70S ribosomes or polysomes). Required for efficient processing of 16S rRNA. May interact with the 5'-terminal helix region of 16S rRNA. The chain is Ribosome-binding factor A from Francisella tularensis subsp. novicida (strain U112).